Consider the following 100-residue polypeptide: Urease subunit gamma (100 aa).

The protein belongs to the urease gamma subunit family. Heterotrimer of UreA (gamma), UreB (beta) and UreC (alpha) subunits. Three heterotrimers associate to form the active enzyme.

The protein resides in the cytoplasm. The catalysed reaction is urea + 2 H2O + H(+) = hydrogencarbonate + 2 NH4(+). It participates in nitrogen metabolism; urea degradation; CO(2) and NH(3) from urea (urease route): step 1/1. This Pseudarthrobacter chlorophenolicus (strain ATCC 700700 / DSM 12829 / CIP 107037 / JCM 12360 / KCTC 9906 / NCIMB 13794 / A6) (Arthrobacter chlorophenolicus) protein is Urease subunit gamma.